Here is a 58-residue protein sequence, read N- to C-terminus: Ferredoxin-2 (58 aa).

4Fe-4S ferredoxin-type domains follow at residues 2–27 and 30–58; these read IEVN…MNEE and KAVV…IVRS. Residue C8 participates in [3Fe-4S] cluster binding. C11 carries the post-translational modification Cysteine methyl disulfide. Residue C14 participates in [3Fe-4S] cluster binding. A disulfide bridge connects residues C18 and C42. [3Fe-4S] cluster is bound at residue C50.

In terms of assembly, homodimer (ferredoxin I) or homotetramer (ferredoxin II). It depends on [3Fe-4S] cluster as a cofactor. The cofactor is [4Fe-4S] cluster.

Ferredoxins are iron-sulfur proteins that transfer electrons in a wide variety of metabolic reactions. The protein is Ferredoxin-2 of Megalodesulfovibrio gigas (Desulfovibrio gigas).